Here is a 582-residue protein sequence, read N- to C-terminus: 2-succinyl-5-enolpyruvyl-6-hydroxy-3-cyclohexene-1-carboxylate synthase (582 aa).

This sequence belongs to the TPP enzyme family. MenD subfamily. As to quaternary structure, homodimer. The cofactor is Mg(2+). Mn(2+) is required as a cofactor. Thiamine diphosphate serves as cofactor.

The catalysed reaction is isochorismate + 2-oxoglutarate + H(+) = 5-enolpyruvoyl-6-hydroxy-2-succinyl-cyclohex-3-ene-1-carboxylate + CO2. The protein operates within quinol/quinone metabolism; 1,4-dihydroxy-2-naphthoate biosynthesis; 1,4-dihydroxy-2-naphthoate from chorismate: step 2/7. It functions in the pathway cofactor biosynthesis; phylloquinone biosynthesis. In terms of biological role, catalyzes the thiamine diphosphate-dependent decarboxylation of 2-oxoglutarate and the subsequent addition of the resulting succinic semialdehyde-thiamine pyrophosphate anion to isochorismate to yield 2-succinyl-5-enolpyruvyl-6-hydroxy-3-cyclohexene-1-carboxylate (SEPHCHC). This is 2-succinyl-5-enolpyruvyl-6-hydroxy-3-cyclohexene-1-carboxylate synthase from Synechococcus elongatus (strain ATCC 33912 / PCC 7942 / FACHB-805) (Anacystis nidulans R2).